The primary structure comprises 345 residues: Anthranilate phosphoribosyltransferase (345 aa).

5-phospho-alpha-D-ribose 1-diphosphate is bound by residues G79, 82–83 (GD), T87, 89–92 (NVST), 106–114 (KHGNRAVSG), and S118. Residue G79 participates in anthranilate binding. Residue S91 participates in Mg(2+) binding. Residue N109 coordinates anthranilate. Residue R164 participates in anthranilate binding. The Mg(2+) site is built by D223 and E224.

This sequence belongs to the anthranilate phosphoribosyltransferase family. As to quaternary structure, homodimer. Requires Mg(2+) as cofactor.

It carries out the reaction N-(5-phospho-beta-D-ribosyl)anthranilate + diphosphate = 5-phospho-alpha-D-ribose 1-diphosphate + anthranilate. It functions in the pathway amino-acid biosynthesis; L-tryptophan biosynthesis; L-tryptophan from chorismate: step 2/5. In terms of biological role, catalyzes the transfer of the phosphoribosyl group of 5-phosphorylribose-1-pyrophosphate (PRPP) to anthranilate to yield N-(5'-phosphoribosyl)-anthranilate (PRA). In Saccharolobus islandicus (strain M.14.25 / Kamchatka #1) (Sulfolobus islandicus), this protein is Anthranilate phosphoribosyltransferase.